Consider the following 672-residue polypeptide: Threonine--tRNA ligase (672 aa).

Residues 1 to 64 (MTELLKISLP…EGDAELALIT (64 aa)) enclose the TGS domain. The interval 257–566 (DHRKLGREMD…LIEHFAGRLP (310 aa)) is catalytic. C362, H413, and H543 together coordinate Zn(2+).

The protein belongs to the class-II aminoacyl-tRNA synthetase family. As to quaternary structure, homodimer. Zn(2+) serves as cofactor.

The protein localises to the cytoplasm. The enzyme catalyses tRNA(Thr) + L-threonine + ATP = L-threonyl-tRNA(Thr) + AMP + diphosphate + H(+). Functionally, catalyzes the attachment of threonine to tRNA(Thr) in a two-step reaction: L-threonine is first activated by ATP to form Thr-AMP and then transferred to the acceptor end of tRNA(Thr). Also edits incorrectly charged L-seryl-tRNA(Thr). This chain is Threonine--tRNA ligase, found in Erythrobacter litoralis (strain HTCC2594).